We begin with the raw amino-acid sequence, 195 residues long: Imidazoleglycerol-phosphate dehydratase (195 aa).

Belongs to the imidazoleglycerol-phosphate dehydratase family.

The protein resides in the cytoplasm. The enzyme catalyses D-erythro-1-(imidazol-4-yl)glycerol 3-phosphate = 3-(imidazol-4-yl)-2-oxopropyl phosphate + H2O. The protein operates within amino-acid biosynthesis; L-histidine biosynthesis; L-histidine from 5-phospho-alpha-D-ribose 1-diphosphate: step 6/9. In Thermotoga petrophila (strain ATCC BAA-488 / DSM 13995 / JCM 10881 / RKU-1), this protein is Imidazoleglycerol-phosphate dehydratase.